The chain runs to 399 residues: tRNA-specific 2-thiouridylase MnmA (399 aa).

ATP contacts are provided by residues 18–25 and Leu-44; that span reads AMSGGVDS. Residue Cys-112 is the Nucleophile of the active site. Cys-112 and Cys-213 form a disulfide bridge. Gly-136 contacts ATP. The interaction with tRNA stretch occupies residues 163–165; it reads RDQ. Cys-213 acts as the Cysteine persulfide intermediate in catalysis.

The protein belongs to the MnmA/TRMU family.

It is found in the cytoplasm. It catalyses the reaction S-sulfanyl-L-cysteinyl-[protein] + uridine(34) in tRNA + AH2 + ATP = 2-thiouridine(34) in tRNA + L-cysteinyl-[protein] + A + AMP + diphosphate + H(+). Its function is as follows. Catalyzes the 2-thiolation of uridine at the wobble position (U34) of tRNA, leading to the formation of s(2)U34. This chain is tRNA-specific 2-thiouridylase MnmA, found in Rhizobium rhizogenes (strain K84 / ATCC BAA-868) (Agrobacterium radiobacter).